The sequence spans 580 residues: Proline--tRNA ligase (580 aa).

The protein belongs to the class-II aminoacyl-tRNA synthetase family. ProS type 1 subfamily. As to quaternary structure, homodimer.

Its subcellular location is the cytoplasm. It carries out the reaction tRNA(Pro) + L-proline + ATP = L-prolyl-tRNA(Pro) + AMP + diphosphate. Catalyzes the attachment of proline to tRNA(Pro) in a two-step reaction: proline is first activated by ATP to form Pro-AMP and then transferred to the acceptor end of tRNA(Pro). As ProRS can inadvertently accommodate and process non-cognate amino acids such as alanine and cysteine, to avoid such errors it has two additional distinct editing activities against alanine. One activity is designated as 'pretransfer' editing and involves the tRNA(Pro)-independent hydrolysis of activated Ala-AMP. The other activity is designated 'posttransfer' editing and involves deacylation of mischarged Ala-tRNA(Pro). The misacylated Cys-tRNA(Pro) is not edited by ProRS. In Mycobacteroides abscessus (strain ATCC 19977 / DSM 44196 / CCUG 20993 / CIP 104536 / JCM 13569 / NCTC 13031 / TMC 1543 / L948) (Mycobacterium abscessus), this protein is Proline--tRNA ligase.